The chain runs to 155 residues: Molybdopterin synthase catalytic subunit 1 (155 aa).

Substrate is bound by residues His101–Arg102, Lys117, and Lys124–Glu126.

This sequence belongs to the MoaE family. MOCS2B subfamily. Heterotetramer; composed of 2 small (MOCS2A) and 2 large (MOCS2B) subunits.

It is found in the cytoplasm. It catalyses the reaction 2 [molybdopterin-synthase sulfur-carrier protein]-C-terminal-Gly-aminoethanethioate + cyclic pyranopterin phosphate + H2O = molybdopterin + 2 [molybdopterin-synthase sulfur-carrier protein]-C-terminal Gly-Gly + 2 H(+). Its pathway is cofactor biosynthesis; molybdopterin biosynthesis. Functionally, catalytic subunit of the molybdopterin synthase complex, a complex that catalyzes the conversion of precursor Z into molybdopterin. Acts by mediating the incorporation of 2 sulfur atoms from thiocarboxylated MOCS2A into precursor Z to generate a dithiolene group. This chain is Molybdopterin synthase catalytic subunit 1, found in Aedes aegypti (Yellowfever mosquito).